Here is a 130-residue protein sequence, read N- to C-terminus: Small ribosomal subunit protein uS9 (130 aa).

The segment covering Lys-99–Met-110 has biased composition (basic and acidic residues). The disordered stretch occupies residues Lys-99–Arg-130. Residues Lys-111–Arg-130 are compositionally biased toward basic residues.

The protein belongs to the universal ribosomal protein uS9 family.

The sequence is that of Small ribosomal subunit protein uS9 from Clostridium botulinum (strain Alaska E43 / Type E3).